The primary structure comprises 237 residues: 7-cyano-7-deazaguanine synthase (237 aa).

Residue tyrosine 9 to leucine 19 coordinates ATP. Zn(2+) is bound by residues cysteine 189, cysteine 199, cysteine 202, and cysteine 205.

This sequence belongs to the QueC family. The cofactor is Zn(2+).

The catalysed reaction is 7-carboxy-7-deazaguanine + NH4(+) + ATP = 7-cyano-7-deazaguanine + ADP + phosphate + H2O + H(+). It functions in the pathway purine metabolism; 7-cyano-7-deazaguanine biosynthesis. Catalyzes the ATP-dependent conversion of 7-carboxy-7-deazaguanine (CDG) to 7-cyano-7-deazaguanine (preQ(0)). The polypeptide is 7-cyano-7-deazaguanine synthase (Geobacter metallireducens (strain ATCC 53774 / DSM 7210 / GS-15)).